The chain runs to 343 residues: Protein-glutamate methylesterase/protein-glutamine glutaminase 2 (343 aa).

In terms of domain architecture, Response regulatory spans 5–122 (KVLVVDDSAI…SVGDMSGQLV (118 aa)). 4-aspartylphosphate is present on aspartate 56. Residues 154-343 (AETSNKVIAI…SIADEIVRMV (190 aa)) enclose the CheB-type methylesterase domain. Residues serine 166, histidine 192, and aspartate 288 contribute to the active site.

This sequence belongs to the CheB family. In terms of processing, phosphorylated by CheA. Phosphorylation of the N-terminal regulatory domain activates the methylesterase activity.

The protein resides in the cytoplasm. It catalyses the reaction [protein]-L-glutamate 5-O-methyl ester + H2O = L-glutamyl-[protein] + methanol + H(+). It carries out the reaction L-glutaminyl-[protein] + H2O = L-glutamyl-[protein] + NH4(+). In terms of biological role, involved in chemotaxis. Part of a chemotaxis signal transduction system that modulates chemotaxis in response to various stimuli. Catalyzes the demethylation of specific methylglutamate residues introduced into the chemoreceptors (methyl-accepting chemotaxis proteins or MCP) by CheR. Also mediates the irreversible deamidation of specific glutamine residues to glutamic acid. This is Protein-glutamate methylesterase/protein-glutamine glutaminase 2 from Syntrophus aciditrophicus (strain SB).